Consider the following 407-residue polypeptide: S-adenosylmethionine synthase (407 aa).

His19 is an ATP binding site. Asp21 is a binding site for Mg(2+). Residue Glu47 participates in K(+) binding. Positions 60 and 103 each coordinate L-methionine. The interval 103-113 is flexible loop; sequence QSQEIADGVDN. The tract at residues 107-134 is disordered; the sequence is IADGVDNSDEARTNGDVEEDDRAGAGDQ. Residues 178–180, Asp258, 264–265, Ala281, and Lys285 each bind ATP; these read DGK and RK. Asp258 contacts L-methionine. Lys289 lines the L-methionine pocket.

It belongs to the AdoMet synthase family. As to quaternary structure, homotetramer; dimer of dimers. Requires Mg(2+) as cofactor. It depends on K(+) as a cofactor.

Its subcellular location is the cytoplasm. It catalyses the reaction L-methionine + ATP + H2O = S-adenosyl-L-methionine + phosphate + diphosphate. Its pathway is amino-acid biosynthesis; S-adenosyl-L-methionine biosynthesis; S-adenosyl-L-methionine from L-methionine: step 1/1. Catalyzes the formation of S-adenosylmethionine (AdoMet) from methionine and ATP. The overall synthetic reaction is composed of two sequential steps, AdoMet formation and the subsequent tripolyphosphate hydrolysis which occurs prior to release of AdoMet from the enzyme. The sequence is that of S-adenosylmethionine synthase from Corynebacterium glutamicum (strain ATCC 13032 / DSM 20300 / JCM 1318 / BCRC 11384 / CCUG 27702 / LMG 3730 / NBRC 12168 / NCIMB 10025 / NRRL B-2784 / 534).